Consider the following 158-residue polypeptide: Large ribosomal subunit protein bL17 (158 aa).

The disordered stretch occupies residues Ala119–Glu158. Residues Ala126–Glu158 show a composition bias toward basic and acidic residues.

The protein belongs to the bacterial ribosomal protein bL17 family. Part of the 50S ribosomal subunit. Contacts protein L32.

The protein is Large ribosomal subunit protein bL17 of Anaeromyxobacter sp. (strain K).